Reading from the N-terminus, the 300-residue chain is Hemagglutinin 1 (300 aa).

The helical transmembrane segment at 200–221 (FIFATVVFIFLQAGRVPEIIAD) threads the bilayer.

Its subcellular location is the cell membrane. Induces agglutination of neuraminidase-treated erythrocytes. This is Hemagglutinin 1 (hag1) from Eikenella corrodens.